Consider the following 349-residue polypeptide: Trans-enoyl reductase phmE (349 aa).

Residue 55-58 (CDWK) participates in NADP(+) binding. 143-150 (TGIGTMGL) contributes to the substrate binding site. NADP(+) is bound by residues 182-185 (SPKN), Tyr200, and 247-248 (LE). Residue 267–271 (GMAIL) coordinates substrate. 336–337 (VS) serves as a coordination point for NADP(+).

It belongs to the zinc-containing alcohol dehydrogenase family. Monomer.

The protein operates within mycotoxin biosynthesis. Trans-enoyl reductase; part of the gene cluster that mediates the biosynthesis of the mycotoxins phomacins, leucine-derived cytochalasans with potent actin polymerization-inhibitory activities and monocot-specific antigerminative activities. The first step in the pathway is catalyzed by the hybrid PKS-NRPS phmA, assisted by the enoyl reductase phmE, that are responsible for fusion of the leucine precursor and the polyketide backbone to produce a 2-pyrrolidone intermediate. The polyketide synthase module (PKS) of phmA is responsible for the synthesis of the polyketide backbone and the downstream nonribosomal peptide synthetase (NRPS) amidates the carboxyl end of the polyketide with the leucine precursor. Because phmA lacks a designated enoylreductase (ER) domain, the required activity is provided the enoyl reductase phmE. Reduction by the hydrolyase phmG, followed by dehydration and intra-molecular Diels-Alder cyclization by the Diels-Alderase phmD then yield the required isoindolone-fused macrocycle. A number of oxidative steps catalyzed by the tailoring cytochrome P450 monooxygenase phmB, the FAD-linked oxidoreductase phmC and the short-chain dehydrogenase/reductase phmF, are further required to afford the final products, phomacin D and phomacin E. In Phaeosphaeria nodorum (strain SN15 / ATCC MYA-4574 / FGSC 10173) (Glume blotch fungus), this protein is Trans-enoyl reductase phmE.